The following is an 893-amino-acid chain: Sperm-associated antigen 1 (893 aa).

Residues 112 to 126 show a composition bias toward basic and acidic residues; sequence ENTRHFHDPEKHPGV. The disordered stretch occupies residues 112-155; sequence ENTRHFHDPEKHPGVEDPLPPVRGSNSCPRGGKETSSKSKTAKK. TPR repeat units lie at residues 213–246, 247–279, and 280–313; these read ANREKGKGNEAFYSGDYEEAVMYYTRSLSALPTA, TAYNNRAQAEIKLQRWSSALEDCEKALELEPGN, and IKALLRRATTYKHQNKFLEAVDDLRKVLQAEPDN. Disordered regions lie at residues 324–344, 349–368, and 373–437; these read ERELKNSEPASELQTKGKRMV, ENSGDEGGKGDEDDHEDDGV, and MGNI…SRGN. Phosphoserine is present on Ser351. The span at 403–415 shows a compositional bias: polar residues; that stretch reads QEGQPETGTASTS. A compositionally biased stretch (basic and acidic residues) spans 416 to 437; it reads DNHDLEERRAADSPGDLKSRGN. TPR repeat units follow at residues 429–463, 471–504, 506–538, 605–638, and 639–672; these read PGDLKSRGNELFRGGQFAEAAVQYSGAIAQLEPTG, SILYSNRAACYLKEGNCRGCIQDCDRALELQPFA, KPLLRRAMAYETLEQYRSAYVDYITVLKIDCRI, FQALKEEGNQLVKDKNYKDAISKYNECLKINSKA, and CAIYTNRALCYLKLGQFEEAKLDCDKALQIDSKN. 630–637 serves as a coordination point for GTP; sequence ECLKINSK. A Phosphoserine modification is found at Ser703. A disordered region spans residues 704-756; that stretch reads PDSSEAARHLDTKNDTAPPSRERERRRIEIQEVDDSSDEEPERPAEASAVEEG. Residues 708 to 733 are compositionally biased toward basic and acidic residues; it reads EAARHLDTKNDTAPPSRERERRRIEI. Residues 734-744 show a composition bias toward acidic residues; the sequence is QEVDDSSDEEP. Phosphoserine occurs at positions 739, 740, and 758.

Testis and sperm.

Its subcellular location is the cytoplasm. The protein resides in the dynein axonemal particle. Functionally, may play a role in the cytoplasmic assembly of the ciliary dynein arms. Binds GTP and has GTPase activity. Plays a role in fertilization. The polypeptide is Sperm-associated antigen 1 (Spag1) (Rattus norvegicus (Rat)).